Here is a 119-residue protein sequence, read N- to C-terminus: Large ribosomal subunit protein uL22 (119 aa).

The protein belongs to the universal ribosomal protein uL22 family. As to quaternary structure, part of the 50S ribosomal subunit.

Functionally, this protein binds specifically to 23S rRNA; its binding is stimulated by other ribosomal proteins, e.g. L4, L17, and L20. It is important during the early stages of 50S assembly. It makes multiple contacts with different domains of the 23S rRNA in the assembled 50S subunit and ribosome. In terms of biological role, the globular domain of the protein is located near the polypeptide exit tunnel on the outside of the subunit, while an extended beta-hairpin is found that lines the wall of the exit tunnel in the center of the 70S ribosome. The sequence is that of Large ribosomal subunit protein uL22 from Bifidobacterium animalis subsp. lactis (strain AD011).